The following is a 249-amino-acid chain: ATP synthase subunit a (249 aa).

6 consecutive transmembrane segments (helical) span residues 30-50 (SLYM…GSAG), 84-104 (FFPL…IGVI), 114-134 (LIVT…YGLY), 143-163 (VFVP…IEVI), 193-213 (FVTS…LPLA), and 220-240 (ILEV…TCIY).

This sequence belongs to the ATPase A chain family. F-type ATPases have 2 components, CF(1) - the catalytic core - and CF(0) - the membrane proton channel. CF(1) has five subunits: alpha(3), beta(3), gamma(1), delta(1), epsilon(1). CF(0) has three main subunits: a(1), b(2) and c(9-12). The alpha and beta chains form an alternating ring which encloses part of the gamma chain. CF(1) is attached to CF(0) by a central stalk formed by the gamma and epsilon chains, while a peripheral stalk is formed by the delta and b chains.

The protein resides in the cell inner membrane. Its function is as follows. Key component of the proton channel; it plays a direct role in the translocation of protons across the membrane. The protein is ATP synthase subunit a of Afipia carboxidovorans (strain ATCC 49405 / DSM 1227 / KCTC 32145 / OM5) (Oligotropha carboxidovorans).